The sequence spans 255 residues: Ribosomal RNA small subunit methyltransferase G (255 aa).

The tract at residues 1–44 is disordered; the sequence is MSSPGRPKGEYRSAQHAGAVAGPPGRPDGEHRGSSGADPNGRLR. S-adenosyl-L-methionine contacts are provided by residues Gly118, Leu123, 169–170, and Arg183; that span reads VE.

It belongs to the methyltransferase superfamily. RNA methyltransferase RsmG family.

The protein localises to the cytoplasm. It carries out the reaction guanosine(527) in 16S rRNA + S-adenosyl-L-methionine = N(7)-methylguanosine(527) in 16S rRNA + S-adenosyl-L-homocysteine. Its function is as follows. Specifically methylates the N7 position of guanine in position 527 of 16S rRNA. This Bordetella petrii (strain ATCC BAA-461 / DSM 12804 / CCUG 43448) protein is Ribosomal RNA small subunit methyltransferase G.